The chain runs to 410 residues: Putative transporter AmpG 1 (410 aa).

The next 12 membrane-spanning stretches (helical) occupy residues 5–25, 40–60, 76–96, 98–118, 141–161, 169–189, 217–237, 265–285, 290–310, 320–340, 356–378, and 383–402; these read LSII…TGNT, IGLL…APIF, LSWI…LSFL, PFDN…FSSM, GIYI…AIYL, EIYK…IVGV, ILKP…LILY, VGKF…GFIM, ILDS…LFII, LLFI…TAYI, YSFF…GYIV, and WQNF…LVLL.

The protein belongs to the major facilitator superfamily.

It localises to the cell inner membrane. The polypeptide is Putative transporter AmpG 1 (ampG1) (Rickettsia bellii (strain RML369-C)).